Here is a 160-residue protein sequence, read N- to C-terminus: Deoxyuridine 5'-triphosphate nucleotidohydrolase (160 aa).

Residues 76–78 (RSG), N89, and 93–95 (TID) contribute to the substrate site. The span at 139 to 149 (HTLSDTERGED) shows a compositional bias: basic and acidic residues. Positions 139 to 160 (HTLSDTERGEDGFGSTGHGSHQ) are disordered. Residues 150-160 (GFGSTGHGSHQ) are compositionally biased toward gly residues.

This sequence belongs to the dUTPase family. Mg(2+) is required as a cofactor.

The enzyme catalyses dUTP + H2O = dUMP + diphosphate + H(+). It participates in pyrimidine metabolism; dUMP biosynthesis; dUMP from dCTP (dUTP route): step 2/2. In terms of biological role, this enzyme is involved in nucleotide metabolism: it produces dUMP, the immediate precursor of thymidine nucleotides and it decreases the intracellular concentration of dUTP so that uracil cannot be incorporated into DNA. The polypeptide is Deoxyuridine 5'-triphosphate nucleotidohydrolase (Beijerinckia indica subsp. indica (strain ATCC 9039 / DSM 1715 / NCIMB 8712)).